The following is a 161-amino-acid chain: MAKEEPQSISRDLQELQKKLSLLIDSFQNNSKVVAFMKSPVGQYLDSHPFLAFTLLVFIVMSAVPVGFFLLIVVLTTLAALLGVIILEGLVISVGGFSLLCILCGLGFVSLAMSGMMIASYVVVSSLISCWFSPRPLTQQNTSCDFLPAMKSAEFEGLYQE.

At 1-43 (MAKEEPQSISRDLQELQKKLSLLIDSFQNNSKVVAFMKSPVGQ) the chain is on the cytoplasmic side. The helical transmembrane segment at 44–61 (YLDSHPFLAFTLLVFIVM) threads the bilayer. The Lumenal portion of the chain corresponds to 62–67 (SAVPVG). The chain crosses the membrane as a helical span at residues 68–87 (FFLLIVVLTTLAALLGVIIL). The Cytoplasmic portion of the chain corresponds to 88-93 (EGLVIS). Residues 94–110 (VGGFSLLCILCGLGFVS) traverse the membrane as a helical segment. The Lumenal portion of the chain corresponds to 111–116 (LAMSGM). Residues 117-133 (MIASYVVVSSLISCWFS) traverse the membrane as a helical segment. The Cytoplasmic portion of the chain corresponds to 134–161 (PRPLTQQNTSCDFLPAMKSAEFEGLYQE).

It belongs to the LDAF1 family. As to quaternary structure, interacts with isoform 1 and isoform 3 of BSCL2/seipin to form an oligomeric complex. As to expression, expressed at high levels in the heart and skeletal muscle. Expressed at low levels in kidney, small intestine, lung and liver.

Its subcellular location is the endoplasmic reticulum membrane. It localises to the lipid droplet. Its function is as follows. Plays an important role in the formation of lipid droplets (LD) which are storage organelles at the center of lipid and energy homeostasis. In association with BSCL2/seipin, defines the sites of LD formation in the endoplasmic reticulum. This Homo sapiens (Human) protein is Lipid droplet assembly factor 1.